The primary structure comprises 264 residues: Thiazole synthase (264 aa).

Catalysis depends on lysine 101, which acts as the Schiff-base intermediate with DXP. 1-deoxy-D-xylulose 5-phosphate is bound by residues glycine 162, 189–190, and 211–212; these read AG and NT. The disordered stretch occupies residues 245–264; the sequence is KRQTASPSTPTLGQPFWHNQ.

It belongs to the ThiG family. As to quaternary structure, homotetramer. Forms heterodimers with either ThiH or ThiS.

The protein localises to the cytoplasm. The catalysed reaction is [ThiS sulfur-carrier protein]-C-terminal-Gly-aminoethanethioate + 2-iminoacetate + 1-deoxy-D-xylulose 5-phosphate = [ThiS sulfur-carrier protein]-C-terminal Gly-Gly + 2-[(2R,5Z)-2-carboxy-4-methylthiazol-5(2H)-ylidene]ethyl phosphate + 2 H2O + H(+). The protein operates within cofactor biosynthesis; thiamine diphosphate biosynthesis. In terms of biological role, catalyzes the rearrangement of 1-deoxy-D-xylulose 5-phosphate (DXP) to produce the thiazole phosphate moiety of thiamine. Sulfur is provided by the thiocarboxylate moiety of the carrier protein ThiS. In vitro, sulfur can be provided by H(2)S. This is Thiazole synthase from Cellvibrio japonicus (strain Ueda107) (Pseudomonas fluorescens subsp. cellulosa).